A 164-amino-acid polypeptide reads, in one-letter code: 3-dehydroquinate dehydratase (164 aa).

Catalysis depends on Y22, which acts as the Proton acceptor. Substrate is bound by residues N73, H79, and D86. The active-site Proton donor is the H99. Residues 100-101 (IS) and R110 each bind substrate.

Belongs to the type-II 3-dehydroquinase family. Homododecamer.

The enzyme catalyses 3-dehydroquinate = 3-dehydroshikimate + H2O. Its pathway is metabolic intermediate biosynthesis; chorismate biosynthesis; chorismate from D-erythrose 4-phosphate and phosphoenolpyruvate: step 3/7. Functionally, catalyzes a trans-dehydration via an enolate intermediate. This Aliarcobacter butzleri (strain RM4018) (Arcobacter butzleri) protein is 3-dehydroquinate dehydratase.